Consider the following 456-residue polypeptide: PTS system sucrose-specific EIIBC component (456 aa).

Positions 4 to 87 constitute a PTS EIIB type-1 domain; the sequence is EQISRSLLPL…IQAAGISESS (84 aa). Residue C26 is the Phosphocysteine intermediate; for EIIB activity of the active site. The PTS EIIC type-1 domain maps to 107 to 456; it reads RLLSNIFVPI…LTLKYKTDAE (350 aa). The next 10 helical transmembrane spans lie at 112–132, 144–164, 181–201, 209–229, 247–267, 288–308, 329–349, 360–380, 388–408, and 428–448; these read IFVP…LLGM, ALYI…PILI, TLGG…AAGF, IEVA…AVWF, LILT…LLIG, AGWL…ITGI, FLLP…FAVW, ITLP…IFGI, FIAA…MHVY, and LLNY…LSLT.

Its subcellular location is the cell inner membrane. It carries out the reaction N(pros)-phospho-L-histidyl-[protein](out) + sucrose = sucrose 6(G)-phosphate(in) + L-histidyl-[protein]. Its function is as follows. The phosphoenolpyruvate-dependent sugar phosphotransferase system (sugar PTS), a major carbohydrate active transport system, catalyzes the phosphorylation of incoming sugar substrates concomitantly with their translocation across the cell membrane. This system is involved in sucrose transport. This chain is PTS system sucrose-specific EIIBC component, found in Klebsiella pneumoniae.